The sequence spans 334 residues: Protein-methionine-sulfoxide reductase catalytic subunit MsrP (334 aa).

Residues 1–44 (MKKNQFLKESDVTAESVFFMKRRQVLKALGISAAALSLPHAAHA) constitute a signal peptide (tat-type signal). Mo-molybdopterin is bound by residues N88, 91–92 (YE), C146, T181, N233, R238, and 249–251 (GIK).

This sequence belongs to the MsrP family. Heterodimer of a catalytic subunit (MsrP) and a heme-binding subunit (MsrQ). Requires Mo-molybdopterin as cofactor. In terms of processing, predicted to be exported by the Tat system. The position of the signal peptide cleavage has not been experimentally proven.

It is found in the periplasm. It carries out the reaction L-methionyl-[protein] + a quinone + H2O = L-methionyl-(S)-S-oxide-[protein] + a quinol. The enzyme catalyses L-methionyl-[protein] + a quinone + H2O = L-methionyl-(R)-S-oxide-[protein] + a quinol. In terms of biological role, part of the MsrPQ system that repairs oxidized periplasmic proteins containing methionine sulfoxide residues (Met-O), using respiratory chain electrons. Thus protects these proteins from oxidative-stress damage caused by reactive species of oxygen and chlorine generated by the host defense mechanisms. MsrPQ is essential for the maintenance of envelope integrity under bleach stress, rescuing a wide series of structurally unrelated periplasmic proteins from methionine oxidation, including the primary periplasmic chaperone SurA and the lipoprotein Pal. The catalytic subunit MsrP is non-stereospecific, being able to reduce both (R-) and (S-) diastereoisomers of methionine sulfoxide. This chain is Protein-methionine-sulfoxide reductase catalytic subunit MsrP, found in Escherichia coli O17:K52:H18 (strain UMN026 / ExPEC).